Consider the following 729-residue polypeptide: 1,4-alpha-glucan branching enzyme GlgB (729 aa).

The active-site Nucleophile is the Asp-409. Glu-462 acts as the Proton donor in catalysis.

It belongs to the glycosyl hydrolase 13 family. GlgB subfamily. Monomer.

It catalyses the reaction Transfers a segment of a (1-&gt;4)-alpha-D-glucan chain to a primary hydroxy group in a similar glucan chain.. It participates in glycan biosynthesis; glycogen biosynthesis. Its function is as follows. Catalyzes the formation of the alpha-1,6-glucosidic linkages in glycogen by scission of a 1,4-alpha-linked oligosaccharide from growing alpha-1,4-glucan chains and the subsequent attachment of the oligosaccharide to the alpha-1,6 position. The protein is 1,4-alpha-glucan branching enzyme GlgB of Saccharophagus degradans (strain 2-40 / ATCC 43961 / DSM 17024).